The following is a 229-amino-acid chain: Peroxiredoxin 1 (229 aa).

The Thioredoxin domain maps to 33 to 192; sequence LGPKNKAPDF…AFRTLKAFQF (160 aa). The Cysteine sulfenic acid (-SOH) intermediate role is filled by cysteine 78.

It belongs to the peroxiredoxin family. AhpC/Prx1 subfamily. In terms of assembly, homodimer; disulfide-linked, upon oxidation.

The catalysed reaction is a hydroperoxide + [thioredoxin]-dithiol = an alcohol + [thioredoxin]-disulfide + H2O. In terms of biological role, thiol-specific peroxidase that catalyzes the reduction of hydrogen peroxide and organic hydroperoxides to water and alcohols, respectively. Plays a role in cell protection against oxidative stress by detoxifying peroxides and as sensor of hydrogen peroxide-mediated signaling events. The polypeptide is Peroxiredoxin 1 (TSA1) (Brugia malayi (Filarial nematode worm)).